The following is a 173-amino-acid chain: Putative phosphoesterase GTNG_0743 (173 aa).

Catalysis depends on histidine 34, which acts as the Proton donor. Short sequence motifs (HXTX) lie at residues 34-37 (HITL) and 115-118 (HITI). The active-site Proton acceptor is histidine 115.

Belongs to the 2H phosphoesterase superfamily. YjcG family.

This chain is Putative phosphoesterase GTNG_0743, found in Geobacillus thermodenitrificans (strain NG80-2).